A 2560-amino-acid polypeptide reads, in one-letter code: Plipastatin synthase subunit B (2560 aa).

The tract at residues 7–310 is condensation 1; that stretch reads IQDIYPLSHM…NTVPVRIRSA (304 aa). The segment at 7 to 1042 is domain 1 (tyrosine-activating); the sequence is IQDIYPLSHM…AVKLMSLKEH (1036 aa). Positions 496 to 889 are adenylation 1; it reads TYRQLQVRAN…QAPGVKEAAV (394 aa). In terms of domain architecture, Carrier 1 spans 965–1040; that stretch reads APRTLIEADL…SMAVKLMSLK (76 aa). Ser-1000 carries the O-(pantetheine 4'-phosphoryl)serine modification. The interval 1052-1342 is condensation 2; sequence QRDVYPLSFS…NTLAMRSKPE (291 aa). The interval 1052 to 2553 is domain 2 (D-allo-threonine-activating); it reads QRDVYPLSFS…DLTLDELSEI (1502 aa). An adenylation 2 region spans residues 1527 to 1927; the sequence is TYRDLNEKAE…QYPMIKEAAV (401 aa). One can recognise a Carrier 2 domain in the interval 2006 to 2080; that stretch reads SPRNEIETVM…ELSARVRKDV (75 aa). Ser-2041 bears the O-(pantetheine 4'-phosphoryl)serine mark. Residues 2088-2553 form an epimerization region; sequence VEGEITWTPI…DLTLDELSEI (466 aa).

Belongs to the ATP-dependent AMP-binding enzyme family. Requires pantetheine 4'-phosphate as cofactor.

In terms of biological role, this protein is a multifunctional enzyme, able to activate and polymerize the amino acids Tyr and Thr as part of the biosynthesis of the lipopeptide antibiotic plipastatin. The Thr residue is further converted to the D-allo-isomer form. The activation sites for these amino acids consist of individual domains. This is Plipastatin synthase subunit B (ppsB) from Bacillus subtilis (strain 168).